The sequence spans 210 residues: ATP-dependent Clp protease proteolytic subunit (210 aa).

Catalysis depends on serine 106, which acts as the Nucleophile. Histidine 131 is a catalytic residue.

It belongs to the peptidase S14 family. In terms of assembly, fourteen ClpP subunits assemble into 2 heptameric rings which stack back to back to give a disk-like structure with a central cavity, resembling the structure of eukaryotic proteasomes.

Its subcellular location is the cytoplasm. It catalyses the reaction Hydrolysis of proteins to small peptides in the presence of ATP and magnesium. alpha-casein is the usual test substrate. In the absence of ATP, only oligopeptides shorter than five residues are hydrolyzed (such as succinyl-Leu-Tyr-|-NHMec, and Leu-Tyr-Leu-|-Tyr-Trp, in which cleavage of the -Tyr-|-Leu- and -Tyr-|-Trp bonds also occurs).. Its function is as follows. Cleaves peptides in various proteins in a process that requires ATP hydrolysis. Has a chymotrypsin-like activity. Plays a major role in the degradation of misfolded proteins. The sequence is that of ATP-dependent Clp protease proteolytic subunit from Bartonella tribocorum (strain CIP 105476 / IBS 506).